The primary structure comprises 159 residues: Protein-export protein SecB (159 aa).

The protein belongs to the SecB family. As to quaternary structure, homotetramer, a dimer of dimers. One homotetramer interacts with 1 SecA dimer.

Its subcellular location is the cytoplasm. In terms of biological role, one of the proteins required for the normal export of preproteins out of the cell cytoplasm. It is a molecular chaperone that binds to a subset of precursor proteins, maintaining them in a translocation-competent state. It also specifically binds to its receptor SecA. This Nitrosospira multiformis (strain ATCC 25196 / NCIMB 11849 / C 71) protein is Protein-export protein SecB.